The chain runs to 279 residues: MPTSNNYFHLHLVSDSTGETLITVARAVAAQYANVTPVEHVYPLVRSQKQLDRVLDEIEEAPGIVLFTLLEKDLVSRLEDKCKGINVPSLSIIGPVMQLFEAYLGAATTGRVGAQHVLNAEYFKRIDALNYTMIHDDGQHVEGLDDADVVLVGVSRTSKTPTSIYLANRGIRTANVPLVPGIPVPVQLETLTRPLVVSLHATPERLIQVRQNRLLSMGADSSSDTYTDRQSVAEEVAFARKLSAKHDWPLLDVTRRSIEETAAAIMKLYSDRQRNRPSE.

Residue 153–160 (GVSRTSKT) coordinates ADP.

It belongs to the pyruvate, phosphate/water dikinase regulatory protein family. PDRP subfamily.

It catalyses the reaction N(tele)-phospho-L-histidyl/L-threonyl-[pyruvate, phosphate dikinase] + ADP = N(tele)-phospho-L-histidyl/O-phospho-L-threonyl-[pyruvate, phosphate dikinase] + AMP + H(+). The enzyme catalyses N(tele)-phospho-L-histidyl/O-phospho-L-threonyl-[pyruvate, phosphate dikinase] + phosphate + H(+) = N(tele)-phospho-L-histidyl/L-threonyl-[pyruvate, phosphate dikinase] + diphosphate. Functionally, bifunctional serine/threonine kinase and phosphorylase involved in the regulation of the pyruvate, phosphate dikinase (PPDK) by catalyzing its phosphorylation/dephosphorylation. The chain is Putative pyruvate, phosphate dikinase regulatory protein from Bradyrhizobium diazoefficiens (strain JCM 10833 / BCRC 13528 / IAM 13628 / NBRC 14792 / USDA 110).